Here is a 123-residue protein sequence, read N- to C-terminus: Pre-B lymphocyte protein 3 (123 aa).

Positions 1–20 (MACRCLSFLLMGTFLSVSQT) are cleaved as a signal peptide. Positions 21–123 (VLAQLDALLV…YCSVGYGFSP (103 aa)) constitute an Ig-like domain. Cys-40 and Cys-115 are disulfide-bonded.

It belongs to the immunoglobulin superfamily. In terms of tissue distribution, expressed in B-cell precursors. Expressed in fetal liver, bone marrow, spleen and lymph node.

Associates with the Ig-mu chain to form a molecular complex that is expressed on the surface of pre-B-cells. The polypeptide is Pre-B lymphocyte protein 3 (VPREB3) (Homo sapiens (Human)).